The sequence spans 453 residues: MPPRTAAERGGRRKSVKAPPPVDPLVELTTLESVHDALAKAERLRNYFQVERDKVNDFWTITKGEVETYRNRLFNAEASIEELERSHQVEMKVYKQRVRHLIYERKKKAQACQDESDRLLREAEDRHLQRMNEIQAKLQQQDQQLRAAAADHEMNVYEKRDSHSYMVTVTKTQSHEKELARLQVSCEAKLKVLRDELELRRRAEIHEIEERKNEHINALIKQHEEKFHEMKTYYNQITTNNLEIIHSLKEEIAQMKQNDEHNETLMYDIDRENQNLVAPLEEAQREVAELQQKRKQNEQNKRGLEVTRVKLRSLREEIRRQREEHQALEERYACVHREREELKGKFESALRQAVMVVEERNEVLQQKLIESHALVEERDVQLEGVLRAMNLEPKTLELIATEVDEWLQRKNQLIKDLHFELKKGEKLYSATLLEMERRCQTANIASLPRSNFE.

A compositionally biased stretch (basic and acidic residues) spans Met-1–Gly-10. The disordered stretch occupies residues Met-1–Val-22. Coiled coils occupy residues Thr-60–Val-156 and Ser-185–Glu-377.

It belongs to the DRC4 family.

The protein resides in the cytoplasm. The protein localises to the cytoskeleton. Its subcellular location is the cell projection. It is found in the cilium. It localises to the flagellum. Functionally, cytoskeletal linker that plays a central role in the flagellum cell motility. Required for directional cell motility. Plays a role as part of a dynein regulatory system that regulates flagellar beat in response to signals from the central pair apparatus and radial spokes in procyclic cells. Also plays an essential role in the bloodstream form of the trypanosomes as its silencing is lethal for the circulating form. This Trypanosoma brucei rhodesiense protein is Trypanin.